Consider the following 44-residue polypeptide: uncharacterized protein (44 aa).

A helical membrane pass occupies residues 4–24; sequence ISSILIRGGGVLIVVILLLWI.

The protein localises to the membrane. This is an uncharacterized protein from Ornithodoros (relapsing fever ticks).